Reading from the N-terminus, the 289-residue chain is Formamidopyrimidine-DNA glycosylase (289 aa).

P2 acts as the Schiff-base intermediate with DNA in catalysis. The active-site Proton donor is the E3. K61 (proton donor; for beta-elimination activity) is an active-site residue. H97, R119, and K168 together coordinate DNA. The FPG-type zinc-finger motif lies at 254–288 (NAYGRAGKPCPRCGEPIVRVQWTNRSSHFCPQCQS). The active-site Proton donor; for delta-elimination activity is R278.

This sequence belongs to the FPG family. In terms of assembly, monomer. Zn(2+) is required as a cofactor.

The catalysed reaction is Hydrolysis of DNA containing ring-opened 7-methylguanine residues, releasing 2,6-diamino-4-hydroxy-5-(N-methyl)formamidopyrimidine.. The enzyme catalyses 2'-deoxyribonucleotide-(2'-deoxyribose 5'-phosphate)-2'-deoxyribonucleotide-DNA = a 3'-end 2'-deoxyribonucleotide-(2,3-dehydro-2,3-deoxyribose 5'-phosphate)-DNA + a 5'-end 5'-phospho-2'-deoxyribonucleoside-DNA + H(+). Its function is as follows. Involved in base excision repair of DNA damaged by oxidation or by mutagenic agents. Acts as a DNA glycosylase that recognizes and removes damaged bases. Has a preference for oxidized purines, such as 7,8-dihydro-8-oxoguanine (8-oxoG). Has AP (apurinic/apyrimidinic) lyase activity and introduces nicks in the DNA strand. Cleaves the DNA backbone by beta-delta elimination to generate a single-strand break at the site of the removed base with both 3'- and 5'-phosphates. The protein is Formamidopyrimidine-DNA glycosylase of Corynebacterium urealyticum (strain ATCC 43042 / DSM 7109).